Here is a 544-residue protein sequence, read N- to C-terminus: Prolyl 4-hydroxylase subunit alpha-3 (544 aa).

The N-terminal stretch at 1–19 (MGPAARLAALLAVLAFRAG) is a signal peptide. Residues 107–131 (LEASENIRALKDGYERVEQDLPAFE) are a coiled coil. The stretch at 227–260 (EDALDHLAFAYFQAGNVLCALNLSREFLLYSPDN) is one TPR repeat. Residue asparagine 248 is glycosylated (N-linked (GlcNAc...) asparagine). A Fe2OG dioxygenase domain is found at 422-529 (YAEYLQVVNY…KWVANKWIHE (108 aa)). 2 residues coordinate Fe cation: histidine 440 and aspartate 442. Residue asparagine 482 is glycosylated (N-linked (GlcNAc...) asparagine). Residue histidine 510 participates in Fe cation binding. Residue lysine 520 participates in 2-oxoglutarate binding.

It belongs to the P4HA family. Heterotetramer of two alpha-3 chains and two beta chains (the beta chain is the multi-functional PDI). Requires Fe(2+) as cofactor. L-ascorbate is required as a cofactor. In terms of processing, N-glycosylation plays no role in the catalytic activity.

Its subcellular location is the endoplasmic reticulum lumen. The enzyme catalyses L-prolyl-[collagen] + 2-oxoglutarate + O2 = trans-4-hydroxy-L-prolyl-[collagen] + succinate + CO2. Catalyzes the post-translational formation of 4-hydroxyproline in -Xaa-Pro-Gly- sequences in collagens and other proteins. This Bos taurus (Bovine) protein is Prolyl 4-hydroxylase subunit alpha-3 (P4HA3).